We begin with the raw amino-acid sequence, 484 residues long: UBX domain-containing protein 11 (484 aa).

A disordered region spans residues 1–28; the sequence is MSSPLASLSKTRKVPLESESVNPGRRGI. A coiled-coil region spans residues 69–147; the sequence is HDSELMASMT…IGEMERFLSD (79 aa). Residues 227-291 enclose the SEP domain; sequence LEPIPLKVYR…VSDLRNQIYP (65 aa). Residues 389 to 466 form the UBX domain; that stretch reads PMPLLSMLRI…GLVPNATLLL (78 aa). Phosphoserine is present on residues serine 478 and serine 482.

Interacts with GNA12, GNA13, RND1, RND2 and RND3.

It localises to the cytoplasm. It is found in the cytoskeleton. Functionally, may be involved in the reorganization of actin cytoskeleton mediated by RND1, RND2 and RND3. Promotes RHOA activation mediated by GNA12 and GNA13. The polypeptide is UBX domain-containing protein 11 (Ubxn11) (Mus musculus (Mouse)).